The following is a 354-amino-acid chain: Glutamine synthetase (354 aa).

One can recognise a GS beta-grasp domain in the interval 22–101 (VQAEYVWIDG…VLAETFNNDG (80 aa)). Residues 108–354 (HRHHTKKVMD…IIVETTVLDK (247 aa)) form the GS catalytic domain.

It belongs to the glutamine synthetase family. In terms of assembly, homooctamer.

It localises to the cytoplasm. The catalysed reaction is L-glutamate + NH4(+) + ATP = L-glutamine + ADP + phosphate + H(+). The chain is Glutamine synthetase (GLNA) from Suillus bovinus (Jersey cow bolete).